Reading from the N-terminus, the 275-residue chain is Ditrans,polycis-undecaprenyl-diphosphate synthase ((2E,6E)-farnesyl-diphosphate specific) (275 aa).

D45 is a catalytic residue. D45 serves as a coordination point for Mg(2+). Substrate-binding positions include 46–49 (GNGR), W50, R58, H62, and 90–92 (SSE). N93 (proton acceptor) is an active-site residue. Substrate-binding positions include W94, R96, R213, and 219–221 (RIS). E232 serves as a coordination point for Mg(2+).

Belongs to the UPP synthase family. As to quaternary structure, homodimer. Requires Mg(2+) as cofactor.

The enzyme catalyses 8 isopentenyl diphosphate + (2E,6E)-farnesyl diphosphate = di-trans,octa-cis-undecaprenyl diphosphate + 8 diphosphate. Functionally, catalyzes the sequential condensation of isopentenyl diphosphate (IPP) with (2E,6E)-farnesyl diphosphate (E,E-FPP) to yield (2Z,6Z,10Z,14Z,18Z,22Z,26Z,30Z,34E,38E)-undecaprenyl diphosphate (di-trans,octa-cis-UPP). UPP is the precursor of glycosyl carrier lipid in the biosynthesis of bacterial cell wall polysaccharide components such as peptidoglycan and lipopolysaccharide. This Shewanella oneidensis (strain ATCC 700550 / JCM 31522 / CIP 106686 / LMG 19005 / NCIMB 14063 / MR-1) protein is Ditrans,polycis-undecaprenyl-diphosphate synthase ((2E,6E)-farnesyl-diphosphate specific).